The chain runs to 431 residues: SPI-1 type 3 secretion system ATPase (431 aa).

An ATP-binding site is contributed by 162-167 (GCGKTM).

It belongs to the ATPase alpha/beta chains family. T3SS ATPase subfamily. As to quaternary structure, the core secretion machinery of the T3SS is composed of approximately 20 different proteins, including cytoplasmic components, a base, an export apparatus and a needle. This subunit is part of the cytosolic complex. Forms homohexamers.

The protein resides in the cytoplasm. It catalyses the reaction ATP + H2O + cellular proteinSide 1 = ADP + phosphate + cellular proteinSide 2.. Its function is as follows. ATPase component of the type III secretion system (T3SS), also called injectisome, which is used to inject bacterial effector proteins into eukaryotic host cells. Acts as a molecular motor to provide the energy that is required for the export of proteins. Required for type III secretion apparatus (T3SA) formation, proper protein secretion, host cell invasion and virulence. May play a critical role in T3SS substrate recognition, disassembly of the effector/chaperone complex and unfolding of the effector in an ATP-dependent manner prior to secretion. This chain is SPI-1 type 3 secretion system ATPase, found in Salmonella typhi.